The following is a 201-amino-acid chain: Recombination protein RecR (201 aa).

The segment at C60–C75 adopts a C4-type zinc-finger fold. The Toprim domain maps to S83 to P178.

It belongs to the RecR family.

Its function is as follows. May play a role in DNA repair. It seems to be involved in an RecBC-independent recombinational process of DNA repair. It may act with RecF and RecO. The sequence is that of Recombination protein RecR from Rhizobium rhizogenes (strain K84 / ATCC BAA-868) (Agrobacterium radiobacter).